A 545-amino-acid chain; its full sequence is Glucose-6-phosphate isomerase (545 aa).

Catalysis depends on Glu-351, which acts as the Proton donor. Catalysis depends on residues His-382 and Lys-510.

Belongs to the GPI family.

The protein resides in the cytoplasm. It carries out the reaction alpha-D-glucose 6-phosphate = beta-D-fructose 6-phosphate. It functions in the pathway carbohydrate biosynthesis; gluconeogenesis. Its pathway is carbohydrate degradation; glycolysis; D-glyceraldehyde 3-phosphate and glycerone phosphate from D-glucose: step 2/4. Functionally, catalyzes the reversible isomerization of glucose-6-phosphate to fructose-6-phosphate. This is Glucose-6-phosphate isomerase from Shewanella woodyi (strain ATCC 51908 / MS32).